The following is a 166-amino-acid chain: Ribosome maturation factor RimP (166 aa).

This sequence belongs to the RimP family.

It is found in the cytoplasm. Functionally, required for maturation of 30S ribosomal subunits. The protein is Ribosome maturation factor RimP of Psychrobacter sp. (strain PRwf-1).